We begin with the raw amino-acid sequence, 179 residues long: NAD(P)H-quinone oxidoreductase subunit I, chloroplastic (179 aa).

4Fe-4S ferredoxin-type domains are found at residues 55-84 and 95-124; these read GRIH…VDWR and LNYS…MTEE. Positions 64, 67, 70, 74, 104, 107, 110, and 114 each coordinate [4Fe-4S] cluster.

Belongs to the complex I 23 kDa subunit family. As to quaternary structure, NDH is composed of at least 16 different subunits, 5 of which are encoded in the nucleus. [4Fe-4S] cluster is required as a cofactor.

It is found in the plastid. It localises to the chloroplast thylakoid membrane. The enzyme catalyses a plastoquinone + NADH + (n+1) H(+)(in) = a plastoquinol + NAD(+) + n H(+)(out). It catalyses the reaction a plastoquinone + NADPH + (n+1) H(+)(in) = a plastoquinol + NADP(+) + n H(+)(out). NDH shuttles electrons from NAD(P)H:plastoquinone, via FMN and iron-sulfur (Fe-S) centers, to quinones in the photosynthetic chain and possibly in a chloroplast respiratory chain. The immediate electron acceptor for the enzyme in this species is believed to be plastoquinone. Couples the redox reaction to proton translocation, and thus conserves the redox energy in a proton gradient. The sequence is that of NAD(P)H-quinone oxidoreductase subunit I, chloroplastic from Nymphaea alba (White water-lily).